We begin with the raw amino-acid sequence, 863 residues long: MLFSPTLSSLLTPSAVKIERENLKQFELENFSCYSIFELIENRCDFYDALLIQLWQEIGLSEQQGISLIAVGGYGRREMFPLSDLDFLILVEQTPSHEIEEKITQFIQFLWDCGFEVGNSVRTLEQCELEGKQDITIATNLLEARFLTGNRPHFDVLNELVKRADFWSKEDFFNAKVQEQIERYQRYHNTAYNLEPDIKFSPGGLRDLHLLYWVALRHSGALTLEAILQSGFIYPQEYQQLQESRAFLFKVRFALHLILKRYDNRLLFDRQIKVSELLGFRGEGNPAVEKMMKCFFQALHRISLISNLLIQHYRENVLSSNQDTVIDQLDDDFQLINQSLCLRNSFVFQEKPARILDLFFYLTQYEHVNIHSDTLRQLQISLEQLSQKLCEIPAAREKFLRLFNQSNAIKRAFMPMHQYGVLTAYLPQWQAIEGLMQFDLFHIYTVDEHTLRVMLKLESFLPKGSAQEHPIAHRIFSQLSDRTLLYIAALFHDIAKGRGGDHAELGAEDVADFAQLHGLDRREIDTLAWLVQSHLLMSITAQRRDIHDPEVVMNFAEAMQNQVRLDYLTCLTVADICATNGNLWNSWKRSLFASLYEFTEQQFSQGMKELLDYSEKSAENRKLAQQILTQDYSDITSISIEKLWTRCPEDYFVRNTPKQIAWHTSLLVDFVEALLVKISNRFSLGGTEVFIYCQDQPHLFNKVVSTIGAKKFSIHDAQIITTQDGYVFDSFIITELNGELVEFDRRRELEQALTVALQSEKLPALSIVPNRQLQHFTVQTDVRFLQENKKEHTEMELVALDKAGLLAQVSQIFTELNLNLLNAKITTVGEKAEDFFILTNQFGQALAREERERLNSVIIQQIR.

A uridylyltransferase region spans residues 1-328 (MLFSPTLSSL…SSNQDTVIDQ (328 aa)). The segment at 329–687 (LDDDFQLINQ…ISNRFSLGGT (359 aa)) is uridylyl-removing. Residues 446–568 (VDEHTLRVML…MQNQVRLDYL (123 aa)) form the HD domain. 2 consecutive ACT domains span residues 688 to 764 (EVFI…KLPA) and 794 to 863 (EMEL…QQIR).

The protein belongs to the GlnD family. Mg(2+) serves as cofactor.

The catalysed reaction is [protein-PII]-L-tyrosine + UTP = [protein-PII]-uridylyl-L-tyrosine + diphosphate. It carries out the reaction [protein-PII]-uridylyl-L-tyrosine + H2O = [protein-PII]-L-tyrosine + UMP + H(+). With respect to regulation, uridylyltransferase (UTase) activity is inhibited by glutamine, while glutamine activates uridylyl-removing (UR) activity. Its function is as follows. Modifies, by uridylylation and deuridylylation, the PII regulatory proteins (GlnB and homologs), in response to the nitrogen status of the cell that GlnD senses through the glutamine level. Under low glutamine levels, catalyzes the conversion of the PII proteins and UTP to PII-UMP and PPi, while under higher glutamine levels, GlnD hydrolyzes PII-UMP to PII and UMP (deuridylylation). Thus, controls uridylylation state and activity of the PII proteins, and plays an important role in the regulation of nitrogen assimilation and metabolism. The protein is Bifunctional uridylyltransferase/uridylyl-removing enzyme of Haemophilus influenzae (strain ATCC 51907 / DSM 11121 / KW20 / Rd).